Consider the following 130-residue polypeptide: MATKSFHRTDRVSAQVRRDLGTIVHAAVRDHGLPSVSVSDVEISRDLAHAKVFVTALQQERSAEAVKGLKDIAGQLRTQLARAMKLRHVPELHFHYDDSVDRGERIDNLLRDLDDVGPGATSSDEDAEQR.

The segment at 111-130 (RDLDDVGPGATSSDEDAEQR) is disordered.

It belongs to the RbfA family. In terms of assembly, monomer. Binds 30S ribosomal subunits, but not 50S ribosomal subunits or 70S ribosomes.

It is found in the cytoplasm. Functionally, one of several proteins that assist in the late maturation steps of the functional core of the 30S ribosomal subunit. Associates with free 30S ribosomal subunits (but not with 30S subunits that are part of 70S ribosomes or polysomes). Required for efficient processing of 16S rRNA. May interact with the 5'-terminal helix region of 16S rRNA. The polypeptide is Ribosome-binding factor A (Xanthomonas oryzae pv. oryzae (strain MAFF 311018)).